The primary structure comprises 86 residues: Neurotoxin LmNaTx34.1 (86 aa).

The N-terminal stretch at 1-18 (MKTVILVVIALMVIEVQG) is a signal peptide. Positions 19–85 (DGYLMVRAGI…IWTYEKNTCS (67 aa)) constitute an LCN-type CS-alpha/beta domain. Cystine bridges form between Cys32/Cys84, Cys36/Cys57, Cys43/Cys64, and Cys47/Cys66.

The protein belongs to the long (4 C-C) scorpion toxin superfamily. Sodium channel inhibitor family. Beta subfamily. In terms of tissue distribution, expressed by the venom gland.

It is found in the secreted. Functionally, binds voltage-independently at site-4 of sodium channels (Nav) and shift the voltage of activation toward more negative potentials thereby affecting sodium channel activation and promoting spontaneous and repetitive firing. In Lychas mucronatus (Chinese swimming scorpion), this protein is Neurotoxin LmNaTx34.1.